The primary structure comprises 230 residues: Ribonuclease 1 (230 aa).

Residues Met1 to Ser22 form the signal peptide. Position 38 (Gln38) interacts with RNA. A disulfide bridge connects residues Cys44 and Cys50. Residues His65, Phe115, His118–Glu119, and Lys122–His123 each bind RNA. His65 serves as the catalytic Proton donor. 3 cysteine pairs are disulfide-bonded: Cys80/Cys126, Cys186/Cys221, and Cys202/Cys213. Residue Glu119 is part of the active site. The Proton acceptor role is filled by His123.

Belongs to the RNase T2 family.

The catalysed reaction is a ribonucleotidyl-ribonucleotide-RNA + H2O = a 3'-end 3'-phospho-ribonucleotide-RNA + a 5'-end dephospho-ribonucleoside-RNA + H(+). Its function is as follows. May remobilize phosphate, particularly when cells senesce or when phosphate becomes limiting. The sequence is that of Ribonuclease 1 (RNS1) from Arabidopsis thaliana (Mouse-ear cress).